A 542-amino-acid polypeptide reads, in one-letter code: Peptide chain release factor 3 (542 aa).

One can recognise a tr-type G domain in the interval 11 to 279 (EKRRTFAIIS…AYVEYAPSPR (269 aa)). Residues 20–27 (SHPDAGKT), 88–92 (DTPGH), and 142–145 (NKLD) contribute to the GTP site.

The protein belongs to the TRAFAC class translation factor GTPase superfamily. Classic translation factor GTPase family. PrfC subfamily.

The protein resides in the cytoplasm. Functionally, increases the formation of ribosomal termination complexes and stimulates activities of RF-1 and RF-2. It binds guanine nucleotides and has strong preference for UGA stop codons. It may interact directly with the ribosome. The stimulation of RF-1 and RF-2 is significantly reduced by GTP and GDP, but not by GMP. The protein is Peptide chain release factor 3 of Nitrosococcus oceani (strain ATCC 19707 / BCRC 17464 / JCM 30415 / NCIMB 11848 / C-107).